Reading from the N-terminus, the 293-residue chain is Nucleotide-binding protein cauri_1197 (293 aa).

An ATP-binding site is contributed by 16-23 (GMSGGGLT). 67 to 70 (DVRS) lines the GTP pocket.

It belongs to the RapZ-like family.

Its function is as follows. Displays ATPase and GTPase activities. This Corynebacterium aurimucosum (strain ATCC 700975 / DSM 44827 / CIP 107346 / CN-1) (Corynebacterium nigricans) protein is Nucleotide-binding protein cauri_1197.